Reading from the N-terminus, the 256-residue chain is Glycerol-3-phosphate acyltransferase (256 aa).

6 helical membrane-spanning segments follow: residues 2–22 (FPYLGIIIASIFGYLLGSVLW), 58–78 (LAVALLDGFKVLITAAFAIGL), 90–110 (SYFIPCIFVLIGHCWPIWFKF), 123–143 (LIVVNYLYFLIFFIVWWIFAF), 153–173 (IIGTATILLLMWLPWTYGVMG), and 211–231 (FADGMLTGQIVILIGMVILVV).

Belongs to the PlsY family. In terms of assembly, probably interacts with PlsX.

Its subcellular location is the cell membrane. It catalyses the reaction an acyl phosphate + sn-glycerol 3-phosphate = a 1-acyl-sn-glycero-3-phosphate + phosphate. Its pathway is lipid metabolism; phospholipid metabolism. Catalyzes the transfer of an acyl group from acyl-phosphate (acyl-PO(4)) to glycerol-3-phosphate (G3P) to form lysophosphatidic acid (LPA). This enzyme utilizes acyl-phosphate as fatty acyl donor, but not acyl-CoA or acyl-ACP. The chain is Glycerol-3-phosphate acyltransferase from Mesoplasma florum (strain ATCC 33453 / NBRC 100688 / NCTC 11704 / L1) (Acholeplasma florum).